Here is a 285-residue protein sequence, read N- to C-terminus: Transcription factor E2F6 (285 aa).

K9 is covalently cross-linked (Glycyl lysine isopeptide (Lys-Gly) (interchain with G-Cter in SUMO2)). Residues 50 to 129 (YVSMRKALKV…SKNHIRWIGS (80 aa)) mediate DNA binding. The short motif at 95-129 (KLGVRKRRVYDITNVLDGIDLVEKKSKNHIRWIGS) is the DEF box element. The dimerization stretch occupies residues 130-222 (DLSNFGAVPQ…PAPKEDSITV (93 aa)). Residues 143–164 (LQEELSDLSAMEDALDELIKDC) form a leucine-zipper region. The tract at residues 173-285 (DDKENERLAY…QSEEVLEVSN (113 aa)) is transcription repression. Residues 240–285 (QGSHSSNKTSDNVGTSSSKSKPLEHPQPEKEENPPQQSEEVLEVSN) are disordered. Polar residues predominate over residues 241–259 (GSHSSNKTSDNVGTSSSKS). The segment covering 260-272 (KPLEHPQPEKEEN) has biased composition (basic and acidic residues).

Belongs to the E2F/DP family. In terms of assembly, forms heterodimers with DP family members TFDP1 or TFDP2. Component of the DRTF1/E2F transcription factor complex. Part of the E2F6.com-1 complex in G0 phase composed of E2F6, MGA, MAX, TFDP1, CBX3, BAT8, EUHMTASE1, RING1, RNF2, MBLR, L3MBTL2 and YAF2. Component of some MLL1/MLL complex, at least composed of the core components KMT2A/MLL1, ASH2L, HCFC1/HCF1, WDR5 and RBBP5, as well as the facultative components BACC1, CHD8, E2F6, HSP70, INO80C, KANSL1, LAS1L, MAX, MCRS1, MGA, KAT8/MOF, PELP1, PHF20, PRP31, RING2, RUVB1/TIP49A, RUVB2/TIP49B, SENP3, TAF1, TAF4, TAF6, TAF7, TAF9 and TEX10.

It localises to the nucleus. Inhibitor of E2F-dependent transcription. Binds DNA cooperatively with DP proteins through the E2 recognition site, 5'-TTTC[CG]CGC-3'. Has a preference for the 5'-TTTCCCGC-3' E2F recognition site. E2F6 lacks the transcriptional activation and pocket protein binding domains. Appears to regulate a subset of E2F-dependent genes whose products are required for entry into the cell cycle but not for normal cell cycle progression. Represses expression of some meiosis-specific genes, including SLC25A31/ANT4. May silence expression via the recruitment of a chromatin remodeling complex containing histone H3-K9 methyltransferase activity. Overexpression delays the exit of cells from the S-phase. This chain is Transcription factor E2F6, found in Bos taurus (Bovine).